We begin with the raw amino-acid sequence, 957 residues long: Glycine dehydrogenase (decarboxylating) (957 aa).

Lys-708 is subject to N6-(pyridoxal phosphate)lysine.

It belongs to the GcvP family. As to quaternary structure, the glycine cleavage system is composed of four proteins: P, T, L and H. The cofactor is pyridoxal 5'-phosphate.

The catalysed reaction is N(6)-[(R)-lipoyl]-L-lysyl-[glycine-cleavage complex H protein] + glycine + H(+) = N(6)-[(R)-S(8)-aminomethyldihydrolipoyl]-L-lysyl-[glycine-cleavage complex H protein] + CO2. Functionally, the glycine cleavage system catalyzes the degradation of glycine. The P protein binds the alpha-amino group of glycine through its pyridoxal phosphate cofactor; CO(2) is released and the remaining methylamine moiety is then transferred to the lipoamide cofactor of the H protein. This is Glycine dehydrogenase (decarboxylating) from Escherichia coli O7:K1 (strain IAI39 / ExPEC).